The following is a 627-amino-acid chain: Altered inheritance of mitochondria protein 9, mitochondrial (627 aa).

A mitochondrion-targeting transit peptide spans 1–43 (MIRYTVAGHSRRCVVGASKRVGAIKCITVAATKRFISNKPNEV).

The protein belongs to the AIM9 family.

It is found in the mitochondrion. The sequence is that of Altered inheritance of mitochondria protein 9, mitochondrial (AIM9) from Saccharomyces cerevisiae (strain YJM789) (Baker's yeast).